A 503-amino-acid chain; its full sequence is Beta-mannosyltransferase 4 (503 aa).

Residues 1–24 are Cytoplasmic-facing; it reads MKLDTQQISHLLSRQMYHLAPRKK. Residues 25–45 form a helical membrane-spanning segment; sequence LLIWGGSLGFVLLLLIVASSH. Residues 46–503 lie on the Extracellular side of the membrane; sequence QRIRSTILHR…QYCQRYGELH (458 aa). Asn468 is a glycosylation site (N-linked (GlcNAc...) asparagine).

It belongs to the BMT family.

Its subcellular location is the membrane. Functionally, beta-mannosyltransferase involved in cell wall biosynthesis. Responsible for addition of a hexose to the beta-mannose chain. The sequence is that of Beta-mannosyltransferase 4 (BMT4) from Komagataella phaffii (strain ATCC 76273 / CBS 7435 / CECT 11047 / NRRL Y-11430 / Wegner 21-1) (Yeast).